The chain runs to 409 residues: Serine/threonine transporter SstT (409 aa).

9 consecutive transmembrane segments (helical) span residues Leu15–Ala35, Phe49–Ile69, Pro82–Ser102, Ala142–Ile162, Leu193–Gly213, Leu218–Phe238, Gly301–Val321, Val331–Ile351, and Leu357–Val377.

It belongs to the dicarboxylate/amino acid:cation symporter (DAACS) (TC 2.A.23) family.

It localises to the cell inner membrane. The enzyme catalyses L-serine(in) + Na(+)(in) = L-serine(out) + Na(+)(out). It catalyses the reaction L-threonine(in) + Na(+)(in) = L-threonine(out) + Na(+)(out). Involved in the import of serine and threonine into the cell, with the concomitant import of sodium (symport system). In Pseudomonas fluorescens (strain ATCC BAA-477 / NRRL B-23932 / Pf-5), this protein is Serine/threonine transporter SstT.